The following is a 98-amino-acid chain: Integration host factor subunit alpha (98 aa).

Basic and acidic residues predominate over residues 53-69 (DLREKSERPGRNPKTGE). Residues 53–73 (DLREKSERPGRNPKTGEDIPI) are disordered.

The protein belongs to the bacterial histone-like protein family. In terms of assembly, heterodimer of an alpha and a beta chain.

Functionally, this protein is one of the two subunits of integration host factor, a specific DNA-binding protein that functions in genetic recombination as well as in transcriptional and translational control. This is Integration host factor subunit alpha from Aliivibrio salmonicida (strain LFI1238) (Vibrio salmonicida (strain LFI1238)).